Here is a 205-residue protein sequence, read N- to C-terminus: Protease (205 aa).

Catalysis depends on residues His55, Asp72, and Cys122.

Belongs to the peptidase C5 family. Interacts with protease cofactor pVI-C; this interaction is necessary for protease activation.

It localises to the virion. The protein resides in the host nucleus. It catalyses the reaction Cleaves proteins of the adenovirus and its host cell at two consensus sites: -Yaa-Xaa-Gly-Gly-|-Xaa- and -Yaa-Xaa-Gly-Xaa-|-Gly- (in which Yaa is Met, Ile or Leu, and Xaa is any amino acid).. Its activity is regulated as follows. Requires DNA and protease cofactor for maximal activation. Inside nascent virions, becomes partially activated by binding to the viral DNA, allowing it to cleave the cofactor that binds to the protease and fully activates it. Actin, like the viral protease cofactor, seems to act as a cofactor in the cleavage of cytokeratin 18 and of actin itself. In terms of biological role, cleaves viral precursor proteins (pTP, pIIIa, pVI, pVII, pVIII, and pX) inside newly assembled particles giving rise to mature virions. Protease complexed to its cofactor slides along the viral DNA to specifically locate and cleave the viral precursors. Mature virions have a weakened organization compared to the unmature virions, thereby facilitating subsequent uncoating. Without maturation, the particle lacks infectivity and is unable to uncoat. Late in adenovirus infection, in the cytoplasm, may participate in the cytoskeleton destruction. Cleaves host cell cytoskeletal keratins K7 and K18. This chain is Protease, found in Galliformes (FAdV-8).